A 356-amino-acid polypeptide reads, in one-letter code: Neutral protease 2 homolog UREG_03761 (356 aa).

Positions 1-19 are cleaved as a signal peptide; it reads MRFSSSFLSVLALASQALA. Positions 20–181 are excised as a propeptide; it reads FPLNDLPTTD…ALPEATLDKR (162 aa). 2 disulfide bridges follow: C189/C259 and C266/C284. H308 contributes to the Zn(2+) binding site. E309 is a catalytic residue. H312 and D323 together coordinate Zn(2+).

It belongs to the peptidase M35 family. Zn(2+) is required as a cofactor.

It is found in the secreted. The enzyme catalyses Preferential cleavage of bonds with hydrophobic residues in P1'. Also 3-Asn-|-Gln-4 and 8-Gly-|-Ser-9 bonds in insulin B chain.. Its function is as follows. Secreted metalloproteinase that allows assimilation of proteinaceous substrates. Shows high activities on basic nuclear substrates such as histone and protamine. The protein is Neutral protease 2 homolog UREG_03761 of Uncinocarpus reesii (strain UAMH 1704).